A 1212-amino-acid chain; its full sequence is DNA-directed RNA polymerase subunit beta' (1212 aa).

Cysteine 60, cysteine 62, cysteine 75, and cysteine 78 together coordinate Zn(2+). Residues aspartate 450, aspartate 452, and aspartate 454 each contribute to the Mg(2+) site. The Zn(2+) site is built by cysteine 819, cysteine 893, cysteine 900, and cysteine 903.

The protein belongs to the RNA polymerase beta' chain family. As to quaternary structure, the RNAP catalytic core consists of 2 alpha, 1 beta, 1 beta' and 1 omega subunit. When a sigma factor is associated with the core the holoenzyme is formed, which can initiate transcription. The cofactor is Mg(2+). It depends on Zn(2+) as a cofactor.

The catalysed reaction is RNA(n) + a ribonucleoside 5'-triphosphate = RNA(n+1) + diphosphate. DNA-dependent RNA polymerase catalyzes the transcription of DNA into RNA using the four ribonucleoside triphosphates as substrates. The chain is DNA-directed RNA polymerase subunit beta' from Streptococcus thermophilus (strain CNRZ 1066).